The sequence spans 217 residues: Probable transaldolase (217 aa).

Lys83 serves as the catalytic Schiff-base intermediate with substrate.

The protein belongs to the transaldolase family. Type 3B subfamily.

Its subcellular location is the cytoplasm. It carries out the reaction D-sedoheptulose 7-phosphate + D-glyceraldehyde 3-phosphate = D-erythrose 4-phosphate + beta-D-fructose 6-phosphate. Its pathway is carbohydrate degradation; pentose phosphate pathway; D-glyceraldehyde 3-phosphate and beta-D-fructose 6-phosphate from D-ribose 5-phosphate and D-xylulose 5-phosphate (non-oxidative stage): step 2/3. Functionally, transaldolase is important for the balance of metabolites in the pentose-phosphate pathway. The sequence is that of Probable transaldolase from Brucella anthropi (strain ATCC 49188 / DSM 6882 / CCUG 24695 / JCM 21032 / LMG 3331 / NBRC 15819 / NCTC 12168 / Alc 37) (Ochrobactrum anthropi).